The primary structure comprises 323 residues: Nucleotide-binding protein ZMO1325 (323 aa).

G25–S32 serves as a coordination point for ATP. D78–T81 is a binding site for GTP.

The protein belongs to the RapZ-like family.

Functionally, displays ATPase and GTPase activities. The polypeptide is Nucleotide-binding protein ZMO1325 (Zymomonas mobilis subsp. mobilis (strain ATCC 31821 / ZM4 / CP4)).